The chain runs to 620 residues: Coenzyme F420-dependent sulfite reductase (620 aa).

In terms of domain architecture, 4Fe-4S ferredoxin-type 1 spans 6–35 (LNEIVDSGVCARCGTCTIVCPNGILTFDER). [4Fe-4S] cluster is bound by residues Cys-15, Cys-18, Cys-21, Cys-25, Cys-428, Cys-434, Cys-468, Cys-472, Cys-495, Cys-498, Cys-501, Cys-505, Cys-524, Cys-527, Cys-530, and Cys-534. Cys-472 lines the siroheme pocket. 2 4Fe-4S ferredoxin-type domains span residues 486–515 (KYPK…IRGE) and 520–544 (NYNV…VKEE).

Belongs to the nitrite and sulfite reductase 4Fe-4S domain family. [4Fe-4S] cluster serves as cofactor. Requires siroheme as cofactor.

It carries out the reaction 3 oxidized coenzyme F420-(gamma-L-Glu)(n) + hydrogen sulfide + 3 H2O + 2 H(+) = 3 reduced coenzyme F420-(gamma-L-Glu)(n) + sulfite. Functionally, catalyzes the reduction of sulfite to sulfide using reduced F420 as the electron source. Involved in sulfite detoxification and assimilation. Cannot use NADH or NADPH. This Methanocaldococcus jannaschii (strain ATCC 43067 / DSM 2661 / JAL-1 / JCM 10045 / NBRC 100440) (Methanococcus jannaschii) protein is Coenzyme F420-dependent sulfite reductase.